The primary structure comprises 272 residues: Probable ribonuclease HI_0526 (272 aa).

The N-terminal stretch at 1-23 is a signal peptide; the sequence is MKKLTSILSLIVLVILAIWQYFT. Residues His-148, Glu-195, and His-199 contribute to the active site.

The protein belongs to the RNase T2 family.

This is Probable ribonuclease HI_0526 from Haemophilus influenzae (strain ATCC 51907 / DSM 11121 / KW20 / Rd).